The following is a 414-amino-acid chain: Tryptophan synthase beta chain (414 aa).

An N6-(pyridoxal phosphate)lysine modification is found at lysine 108.

The protein belongs to the TrpB family. As to quaternary structure, tetramer of two alpha and two beta chains. The cofactor is pyridoxal 5'-phosphate.

The catalysed reaction is (1S,2R)-1-C-(indol-3-yl)glycerol 3-phosphate + L-serine = D-glyceraldehyde 3-phosphate + L-tryptophan + H2O. Its pathway is amino-acid biosynthesis; L-tryptophan biosynthesis; L-tryptophan from chorismate: step 5/5. Its function is as follows. The beta subunit is responsible for the synthesis of L-tryptophan from indole and L-serine. The sequence is that of Tryptophan synthase beta chain from Beijerinckia indica subsp. indica (strain ATCC 9039 / DSM 1715 / NCIMB 8712).